The primary structure comprises 280 residues: Protein scylla (280 aa).

Positions 39 to 96 (LMSKKAKTTTGGSSNGSNATATSTTTSTSSSIKHKQPAGSSNNNVGQSQSKKTKPSGS) are disordered. Low complexity-rich tracts occupy residues 46–69 (TTTG…TSSS) and 77–96 (GSSN…PSGS).

This sequence belongs to the DDIT4 family.

The protein resides in the cytoplasm. In terms of biological role, inhibits cell growth by regulating the Tor pathway upstream of the Tsc1-Tsc2 complex and downstream of Akt1. Acts as a cell death activator during head development. This is Protein scylla (scyl) from Drosophila melanogaster (Fruit fly).